Here is a 102-residue protein sequence, read N- to C-terminus: Anti-lipopolysaccharide factor (102 aa).

Cys-32 and Cys-53 are disulfide-bonded.

Binds tightly to LPS and thus specifically inhibits the LPS-mediated activation of the hemolymph coagulation. It has a strong antibacterial effect especially on the growth of Gram-negative bacteria. The chain is Anti-lipopolysaccharide factor from Tachypleus tridentatus (Japanese horseshoe crab).